The primary structure comprises 252 residues: 3-dehydroquinate dehydratase (252 aa).

3-dehydroquinate contacts are provided by residues S21, 46-48 (EWR), and R82. Residue H143 is the Proton donor/acceptor of the active site. Catalysis depends on K170, which acts as the Schiff-base intermediate with substrate. The 3-dehydroquinate site is built by R213, S232, and Q236.

This sequence belongs to the type-I 3-dehydroquinase family. In terms of assembly, homodimer.

The catalysed reaction is 3-dehydroquinate = 3-dehydroshikimate + H2O. The protein operates within metabolic intermediate biosynthesis; chorismate biosynthesis; chorismate from D-erythrose 4-phosphate and phosphoenolpyruvate: step 3/7. Its function is as follows. Involved in the third step of the chorismate pathway, which leads to the biosynthesis of aromatic amino acids. Catalyzes the cis-dehydration of 3-dehydroquinate (DHQ) and introduces the first double bond of the aromatic ring to yield 3-dehydroshikimate. This chain is 3-dehydroquinate dehydratase, found in Salmonella agona (strain SL483).